Consider the following 303-residue polypeptide: UDP-3-O-acyl-N-acetylglucosamine deacetylase (303 aa).

Residues His78, His237, and Asp241 each coordinate Zn(2+). The active-site Proton donor is His264.

The protein belongs to the LpxC family. It depends on Zn(2+) as a cofactor.

The enzyme catalyses a UDP-3-O-[(3R)-3-hydroxyacyl]-N-acetyl-alpha-D-glucosamine + H2O = a UDP-3-O-[(3R)-3-hydroxyacyl]-alpha-D-glucosamine + acetate. The protein operates within glycolipid biosynthesis; lipid IV(A) biosynthesis; lipid IV(A) from (3R)-3-hydroxytetradecanoyl-[acyl-carrier-protein] and UDP-N-acetyl-alpha-D-glucosamine: step 2/6. Catalyzes the hydrolysis of UDP-3-O-myristoyl-N-acetylglucosamine to form UDP-3-O-myristoylglucosamine and acetate, the committed step in lipid A biosynthesis. The chain is UDP-3-O-acyl-N-acetylglucosamine deacetylase from Azotobacter vinelandii (strain DJ / ATCC BAA-1303).